Here is an 847-residue protein sequence, read N- to C-terminus: Matrin-3 (847 aa).

Ser-2 is modified (N-acetylserine). Lys-3 carries the post-translational modification N6-acetyllysine; alternate. Residue Lys-3 forms a Glycyl lysine isopeptide (Lys-Gly) (interchain with G-Cter in SUMO2); alternate linkage. Residues Ser-4, Ser-9, Ser-11, Ser-14, Ser-22, Ser-41, Ser-118, and Ser-126 each carry the phosphoserine modification. Residues Lys-132 and Lys-146 each participate in a glycyl lysine isopeptide (Lys-Gly) (interchain with G-Cter in SUMO2) cross-link. 2 disordered regions span residues 146–174 (KRRRTEEGPTLSYGRDGRSATREPPYRVP) and 187–214 (DSFDDRGPSLNPVLDYDHGSRSQESGYY). Thr-150 carries the post-translational modification Phosphothreonine. Phosphoserine is present on Ser-157. Residue Tyr-158 is modified to Phosphotyrosine. The span at 160 to 174 (RDGRSATREPPYRVP) shows a compositional bias: basic and acidic residues. Residues Ser-164, Ser-188, and Ser-195 each carry the phosphoserine modification. A compositionally biased stretch (basic and acidic residues) spans 201-214 (DYDHGSRSQESGYY). Tyr-202 carries the phosphotyrosine modification. 3 positions are modified to phosphoserine: Ser-206, Ser-208, and Ser-211. At Tyr-219 the chain carries Phosphotyrosine. Ser-234 carries the post-translational modification Phosphoserine. A Glycyl lysine isopeptide (Lys-Gly) (interchain with G-Cter in SUMO2) cross-link involves residue Lys-245. Phosphoserine is present on Ser-264. Residue Lys-269 forms a Glycyl lysine isopeptide (Lys-Gly) (interchain with G-Cter in SUMO2) linkage. Ser-275 bears the Phosphoserine mark. Positions 342–394 (PFMLQQSTNPAPGILGPPPPSFHLGGPAVGPRGNLGAGNGNLQGPRHMQKGRV) are disordered. Residues 398 to 473 (RVVHIMDFQR…KPVRVHLSQK (76 aa)) form the RRM 1 domain. Glycyl lysine isopeptide (Lys-Gly) (interchain with G-Cter in SUMO2) cross-links involve residues Lys-478, Lys-487, and Lys-491. In terms of domain architecture, RRM 2 spans 496–571 (RVIHLSNLPH…RCVKVDLSEK (76 aa)). A phosphoserine mark is found at Ser-509 and Ser-511. Lys-515 is covalently cross-linked (Glycyl lysine isopeptide (Lys-Gly) (interchain with G-Cter in SUMO2)). Lys-522 bears the N6-acetyllysine; alternate mark. Lys-522 participates in a covalent cross-link: Glycyl lysine isopeptide (Lys-Gly) (interchain with G-Cter in SUMO2); alternate. Ser-533 bears the Phosphoserine mark. Glycyl lysine isopeptide (Lys-Gly) (interchain with G-Cter in SUMO2) cross-links involve residues Lys-554 and Lys-555. Lys-571 is subject to N6-acetyllysine. Positions 588–786 (KKDKSRKRSY…DEYRIGPYQP (199 aa)) are disordered. 4 positions are modified to phosphoserine: Ser-596, Ser-598, Ser-604, and Ser-606. A compositionally biased stretch (basic and acidic residues) spans 600-643 (DGKESPSDKKSKTDGSQKTESSTEGKEQEEKSGEDGEKDTKDDQ). Glycyl lysine isopeptide (Lys-Gly) (interchain with G-Cter in SUMO2) cross-links involve residues Lys-617 and Lys-630. A compositionally biased stretch (acidic residues) spans 653–665 (ESEDELLVDEEEA). A phosphoserine mark is found at Ser-654, Ser-671, Ser-673, and Ser-674. Over residues 666 to 676 (AALLESGSSVG) the composition is skewed to low complexity. Thr-679 is modified (phosphothreonine). Ser-689 carries the post-translational modification Phosphoserine. Residues 689 to 704 (SDGKKEPSDKAVKKDG) show a composition bias toward basic and acidic residues. Residues 710–718 (AKKKLKKVD) carry the Nuclear localization signal motif. Residues Lys-719 and Lys-736 each participate in a glycyl lysine isopeptide (Lys-Gly) (interchain with G-Cter in SUMO2) cross-link. Thr-741 carries the post-translational modification Phosphothreonine. Phosphoserine is present on residues Ser-747, Ser-759, and Ser-766. Residues 767-780 (DENKDDYTIPDEYR) are compositionally biased toward basic and acidic residues. A Glycyl lysine isopeptide (Lys-Gly) (interchain with G-Cter in SUMO2) cross-link involves residue Lys-770. Residues 801 to 832 (FYCKLCSLFYTNEEVAKNTHCSSLPHYQKLKK) form a Matrin-type zinc finger. The residue at position 836 (Lys-836) is an N6-acetyllysine; alternate. Residue Lys-836 forms a Glycyl lysine isopeptide (Lys-Gly) (interchain with G-Cter in SUMO2); alternate linkage.

As to quaternary structure, part of a complex consisting of SFPQ, NONO and MATR3. Interacts with AGO1 and AGO2. Part of a complex composed at least of ASH2L, EMSY, HCFC1, HSPA8, CCAR2, MATR3, MKI67, RBBP5, TUBB2A, WDR5 and ZNF335; this complex may have a histone H3-specific methyltransferase activity. Interacts with TARDBP. Part of the HDP-RNP complex composed of at least HEXIM1, PRKDC, XRCC5, XRCC6, paraspeckle proteins (SFPQ, NONO, PSPC1, RBM14, and MATR3) and NEAT1 RNA. Interacts with FUS. Interacts with IGF2BP1; the interaction is enhanced by SEPIN14P20 peptide RBPR. Interacts with IGF2BP2 and IGF2BP3. Interacts with RBPMS.

It localises to the nucleus matrix. May play a role in transcription or may interact with other nuclear matrix proteins to form the internal fibrogranular network. In association with the SFPQ-NONO heteromer may play a role in nuclear retention of defective RNAs. Plays a role in the regulation of DNA virus-mediated innate immune response by assembling into the HDP-RNP complex, a complex that serves as a platform for IRF3 phosphorylation and subsequent innate immune response activation through the cGAS-STING pathway. Binds to N6-methyladenosine (m6A)-containing mRNAs and contributes to MYC stability by binding to m6A-containing MYC mRNAs. May bind to specific miRNA hairpins. The sequence is that of Matrin-3 (MATR3) from Homo sapiens (Human).